Here is a 170-residue protein sequence, read N- to C-terminus: Lipoprotein signal peptidase (170 aa).

3 helical membrane-spanning segments follow: residues 12 to 32 (WYWV…WVLA), 67 to 87 (WQRW…TVWL), and 93 to 113 (GLWR…GNLI). Catalysis depends on residues Asp123 and Asp141. A helical membrane pass occupies residues 133–153 (HFPAFNIADSAICVGAGLIIL).

The protein belongs to the peptidase A8 family.

It localises to the cell inner membrane. It carries out the reaction Release of signal peptides from bacterial membrane prolipoproteins. Hydrolyzes -Xaa-Yaa-Zaa-|-(S,diacylglyceryl)Cys-, in which Xaa is hydrophobic (preferably Leu), and Yaa (Ala or Ser) and Zaa (Gly or Ala) have small, neutral side chains.. It participates in protein modification; lipoprotein biosynthesis (signal peptide cleavage). This protein specifically catalyzes the removal of signal peptides from prolipoproteins. The polypeptide is Lipoprotein signal peptidase (Shewanella loihica (strain ATCC BAA-1088 / PV-4)).